The chain runs to 173 residues: SGQIQLWQFLLELLSDSSNANCITWEGTNGEFKMTDPDEVARRWGERKSKPNMNYDKLSRALRYYYDKNIMTKVHGKRYAYKFDFAGLAQAMQPVQADPSMYRYQSDLTYLPGYHPTKLNFVGTPINPSTNASLFSSHSSYWSSPTGANIYPSGHVTHPHASHMSSHIGTYYG.

Residues 1–84 (SGQIQLWQFL…HGKRYAYKFD (84 aa)) constitute a DNA-binding region (ETS).

It belongs to the ETS family.

The protein resides in the nucleus. Functionally, acts as a transcriptional activator. This is Transcriptional regulator ERG homolog (ERG) from Lytechinus variegatus (Green sea urchin).